The chain runs to 317 residues: Transcriptional regulator LsrR (317 aa).

Positions 33-56 form a DNA-binding region, H-T-H motif; it reads QSEISDRLGLTRLKVSRLLEKGHQ.

Belongs to the SorC transcriptional regulatory family.

It localises to the cytoplasm. With respect to regulation, inactivated by phosphorylated autoinducer-2 (phospho-AI-2). Phospho-AI-2 acts by binding to LsrR, which is then unable to bind to the promoter regions, allowing the transcription of the target genes. In terms of biological role, transcriptional regulator that represses the expression of the lsr operon in the absence of the quorum-sensing signaling molecule autoinducer 2 (AI-2). It also represses the expression of the lsrRK operon. Acts by binding directly to the lsrA and lsrR promoter regions. In the presence of phosphorylated autoinducer-2 (phospho-AI-2), LsrR is inactivated, leading to the transcription of the genes. The polypeptide is Transcriptional regulator LsrR (lsrR) (Escherichia coli O157:H7).